The following is a 219-amino-acid chain: Lipid transferase CIDEA (219 aa).

One can recognise a CIDE-N domain in the interval 33 to 110 (PARPFRVSNH…ILEKGQKWMP (78 aa)). The tract at residues 163–180 (CTGLKGLLRSLLRFLSYS) is amphipathic helix.

Belongs to the CIDE family. As to quaternary structure, homodimer. Interacts with CIDEC. Directly interacts with CEBPB. Interacts with isoform CLSTN3beta of CLSTN3; inhibiting the lipid transferase activity of CIDEA. Expressed in omental and subcutaneous adipose tissue (at protein level).

Its subcellular location is the lipid droplet. It is found in the nucleus. It carries out the reaction a triacyl-sn-glycerol(in) = a triacyl-sn-glycerol(out). Functionally, lipid transferase that promotes unilocular lipid droplet formation by mediating lipid droplet fusion. Lipid droplet fusion promotes their enlargement, restricting lipolysis and favoring lipid storage. Localizes on the lipid droplet surface, at focal contact sites between lipid droplets, and mediates atypical lipid droplet fusion by promoting directional net neutral lipid transfer from the smaller to larger lipid droplets. The transfer direction may be driven by the internal pressure difference between the contacting lipid droplet pair and occurs at a lower rate than that promoted by CIDEC. May also act as a CEBPB coactivator in epithelial cells to control the expression of a subset of CEBPB downstream target genes, including ID2, IGF1, PRLR, SOCS1, SOCS3, XDH, but not casein. By interacting with CEBPB, strengthens the association of CEBPB with the XDH promoter, increases histone acetylation and dissociates HDAC1 from the promoter. When overexpressed, induces apoptosis; the physiological significance of its role in apoptosis is unclear. This chain is Lipid transferase CIDEA, found in Homo sapiens (Human).